Reading from the N-terminus, the 93-residue chain is Large ribosomal subunit protein bL27 (93 aa).

The propeptide occupies 1 to 9; sequence MLQLNLQFF. The tract at residues 14 to 33 is disordered; it reads GVGSTKNGRDSISKRLGAKR.

This sequence belongs to the bacterial ribosomal protein bL27 family. In terms of processing, the N-terminus is cleaved by ribosomal processing cysteine protease Prp.

This is Large ribosomal subunit protein bL27 from Exiguobacterium sp. (strain ATCC BAA-1283 / AT1b).